Consider the following 330-residue polypeptide: Dimethyladenosine transferase 1, mitochondrial (330 aa).

The transit peptide at 1–84 (MAQPSARVLQ…RSILRRHPQR (84 aa)) directs the protein to the mitochondrion. Residues 38 to 41 (QNFL), Asn-39, Leu-41, Gly-67, Glu-89, Asp-118, and Asn-140 contribute to the S-adenosyl-L-methionine site.

The protein belongs to the class I-like SAM-binding methyltransferase superfamily. rRNA adenine N(6)-methyltransferase family. KsgA subfamily.

It is found in the mitochondrion. Functionally, probable S-adenosyl-L-methionine-dependent methyltransferase which specifically dimethylates mitochondrial 12S rRNA at the conserved stem loop. In contrast to mtTFB2, it does not have a critical role in either transcription or regulation of the copy number of mitochondrial DNA. The chain is Dimethyladenosine transferase 1, mitochondrial (mtTFB1) from Drosophila melanogaster (Fruit fly).